The sequence spans 189 residues: dCTP deaminase, dUMP-forming (189 aa).

Residues 101 to 106 (KSSLGR), Asp119, 127 to 129 (TLE), Gln148, Tyr162, and Gln174 contribute to the dCTP site. Glu129 functions as the Proton donor/acceptor in the catalytic mechanism.

Belongs to the dCTP deaminase family. In terms of assembly, homotrimer.

The catalysed reaction is dCTP + 2 H2O = dUMP + NH4(+) + diphosphate. The protein operates within pyrimidine metabolism; dUMP biosynthesis; dUMP from dCTP: step 1/1. Functionally, bifunctional enzyme that catalyzes both the deamination of dCTP to dUTP and the hydrolysis of dUTP to dUMP without releasing the toxic dUTP intermediate. In Rhodococcus jostii (strain RHA1), this protein is dCTP deaminase, dUMP-forming.